The primary structure comprises 223 residues: Ribose-5-phosphate isomerase A (223 aa).

Substrate is bound by residues 28 to 31 (TGST), 81 to 84 (DGAD), and 94 to 97 (KGGG). Glutamate 103 functions as the Proton acceptor in the catalytic mechanism. Substrate is bound at residue lysine 121.

Belongs to the ribose 5-phosphate isomerase family. Homodimer.

The catalysed reaction is aldehydo-D-ribose 5-phosphate = D-ribulose 5-phosphate. It participates in carbohydrate degradation; pentose phosphate pathway; D-ribose 5-phosphate from D-ribulose 5-phosphate (non-oxidative stage): step 1/1. Functionally, catalyzes the reversible conversion of ribose-5-phosphate to ribulose 5-phosphate. The polypeptide is Ribose-5-phosphate isomerase A (Janthinobacterium sp. (strain Marseille) (Minibacterium massiliensis)).